A 555-amino-acid polypeptide reads, in one-letter code: Aerobic glycerol-3-phosphate dehydrogenase (555 aa).

Position 24–52 (24–52 (DLFIIGGGITGAGTALDAASRGMKVALSE)) interacts with FAD.

This sequence belongs to the FAD-dependent glycerol-3-phosphate dehydrogenase family. Requires FAD as cofactor.

The protein localises to the cytoplasm. It carries out the reaction a quinone + sn-glycerol 3-phosphate = dihydroxyacetone phosphate + a quinol. The protein operates within polyol metabolism; glycerol degradation via glycerol kinase pathway; glycerone phosphate from sn-glycerol 3-phosphate (aerobic route): step 1/1. In Bacillus subtilis (strain 168), this protein is Aerobic glycerol-3-phosphate dehydrogenase (glpD).